A 202-amino-acid polypeptide reads, in one-letter code: Imidazoleglycerol-phosphate dehydratase (202 aa).

This sequence belongs to the imidazoleglycerol-phosphate dehydratase family.

Its subcellular location is the cytoplasm. It catalyses the reaction D-erythro-1-(imidazol-4-yl)glycerol 3-phosphate = 3-(imidazol-4-yl)-2-oxopropyl phosphate + H2O. It functions in the pathway amino-acid biosynthesis; L-histidine biosynthesis; L-histidine from 5-phospho-alpha-D-ribose 1-diphosphate: step 6/9. The protein is Imidazoleglycerol-phosphate dehydratase of Brucella suis (strain ATCC 23445 / NCTC 10510).